Consider the following 254-residue polypeptide: HLA class II histocompatibility antigen, DR alpha chain (254 aa).

An N-terminal signal peptide occupies residues 1 to 25 (MAISGVPVLGFFIIAVLMSAQESWA). Residues 26–109 (IKEEHVIIQA…KRSNYTPITN (84 aa)) are alpha-1. Residues 26 to 216 (IKEEHVIIQA…APSPLPETTE (191 aa)) are Extracellular-facing. N-linked (GlcNAc...) asparagine glycans are attached at residues Asn103 and Asn143. Positions 110–203 (VPPEVTVLTN…GLDEPLLKHW (94 aa)) are alpha-2. Positions 112–204 (PEVTVLTNSP…LDEPLLKHWE (93 aa)) constitute an Ig-like C1-type domain. Cys132 and Cys188 are joined by a disulfide. Residues 204 to 216 (EFDAPSPLPETTE) are connecting peptide. The chain crosses the membrane as a helical span at residues 217–239 (NVVCALGLTVGLVGIIIGTIFII). Topologically, residues 240–254 (KGLRKSNAAERRGPL) are cytoplasmic. Lys244 is covalently cross-linked (Glycyl lysine isopeptide (Lys-Gly) (interchain with G-Cter in ubiquitin)).

This sequence belongs to the MHC class II family. Heterotrimer that consists of an alpha chain HLA-DRA, a beta chain HLA-DRB and a peptide (peptide-MHCII). Newly synthesized alpha and beta chains forms a heterodimer (MHCII) that associates with the CD74/invariant chain (Ii) in the endoplasmic reticulum (ER). Ii is a trimer composed of three subunits and each subunit interacts with one MHCII dimer, blocking the peptide-binding cleft. As a result, MHCII molecules cannot bind peptides present in the ER. The complex of MHCII and CD74/Ii is transported in vesicles from ER to Golgi to lysosomes, where it encounters antigenic peptides generated via proteolysis of endocytosed antigens. MHCII dimers are dissociated from CD74/Ii by the combined action of proteolysis and HLA-DM. Lysosomal enzymes such as cathepsin, degrade CD74/Ii leaving a 24 amino acid remnant called class II-associated Ii or CLIP. Interacts (via the peptide binding cleft) with CLIP; this interaction inhibits antigen peptide binding before entry in the endosomal compartment. The displacement of CLIP and replacement by a high affinity peptide in lysosomes is performed by HLA-DM heterodimer. HLA-DM catalyzes CLIP dissociation from MHCII, stabilizes empty MHCII and mediates the selection of high affinity peptides. Interacts with HLA-DM heterodimer; this interaction is direct. Interacts (via alpha-1 domain) with TCR (via CDRs). Interacts (via alpha-2 domain) with CD4 (via Ig-like V-type domain); this interaction increases the affinity of TCR for peptide-MHCII. In terms of assembly, (Microbial infection) Interacts with Epstein-Barr virus BZLF2/gp42. As to quaternary structure, (Microbial infection) Interacts with Staphylococcus aureus enterotoxin A/entA, enterotoxin B/entB, enterotoxin C1/entC1, enterotoxin D/entD, and enterotoxin H/entH. Ubiquitinated by MARCHF1 or MARCHF8 at Lys-244 leading to down-regulation of MHCII. When associated with ubiquitination of the beta chain at 'Lys-254', the down-regulation of MHCII may be highly effective. Expressed in professional APCs: macrophages, dendritic cells and B cells (at protein level). Expressed in thymic epithelial cells (at protein level).

It is found in the cell membrane. The protein resides in the endoplasmic reticulum membrane. The protein localises to the early endosome membrane. It localises to the late endosome membrane. Its subcellular location is the lysosome membrane. It is found in the autolysosome membrane. In terms of biological role, an alpha chain of antigen-presenting major histocompatibility complex class II (MHCII) molecule. In complex with the beta chain HLA-DRB, displays antigenic peptides on professional antigen presenting cells (APCs) for recognition by alpha-beta T cell receptor (TCR) on HLA-DR-restricted CD4-positive T cells. This guides antigen-specific T-helper effector functions, both antibody-mediated immune response and macrophage activation, to ultimately eliminate the infectious agents and transformed cells. Typically presents extracellular peptide antigens of 10 to 30 amino acids that arise from proteolysis of endocytosed antigens in lysosomes. In the tumor microenvironment, presents antigenic peptides that are primarily generated in tumor-resident APCs likely via phagocytosis of apoptotic tumor cells or macropinocytosis of secreted tumor proteins. Presents peptides derived from intracellular proteins that are trapped in autolysosomes after macroautophagy, a mechanism especially relevant for T cell selection in the thymus and central immune tolerance. The selection of the immunodominant epitopes follows two processing modes: 'bind first, cut/trim later' for pathogen-derived antigenic peptides and 'cut first, bind later' for autoantigens/self-peptides. The anchor residue at position 1 of the peptide N-terminus, usually a large hydrophobic residue, is essential for high affinity interaction with MHCII molecules. The protein is HLA class II histocompatibility antigen, DR alpha chain (HLA-DRA) of Homo sapiens (Human).